Reading from the N-terminus, the 144-residue chain is Cytochrome c oxidase subunit 4 isoform 1, mitochondrial (144 aa).

The Mitochondrial matrix portion of the chain corresponds to 1–73; sequence SVVKSEDFSL…SFAEMNRGSN (73 aa). N6-acetyllysine; alternate is present on Lys-4. Lys-4 is subject to N6-succinyllysine; alternate. The residue at position 28 (Lys-28) is an N6-acetyllysine. 2 positions are modified to phosphoserine: Ser-31 and Ser-33. Lys-35 carries the post-translational modification N6-acetyllysine; alternate. Lys-35 is modified (N6-succinyllysine; alternate). Position 42 is an N6-acetyllysine (Lys-42). A helical membrane pass occupies residues 74-99; that stretch reads EWKTVVGGAMFFIGFTALVIMWQKHY. Over 100-144 the chain is Mitochondrial intermembrane; it reads VYGPLPQSFDKEWVAKQTKRMLDMKVNPIQGLASKWDYEKNEWKK.

The protein belongs to the cytochrome c oxidase IV family. In terms of assembly, component of the cytochrome c oxidase (complex IV, CIV), a multisubunit enzyme composed of 14 subunits. The complex is composed of a catalytic core of 3 subunits MT-CO1, MT-CO2 and MT-CO3, encoded in the mitochondrial DNA, and 11 supernumerary subunits COX4I, COX5A, COX5B, COX6A, COX6B, COX6C, COX7A, COX7B, COX7C, COX8 and NDUFA4, which are encoded in the nuclear genome. The complex exists as a monomer or a dimer and forms supercomplexes (SCs) in the inner mitochondrial membrane with NADH-ubiquinone oxidoreductase (complex I, CI) and ubiquinol-cytochrome c oxidoreductase (cytochrome b-c1 complex, complex III, CIII), resulting in different assemblies (supercomplex SCI(1)III(2)IV(1) and megacomplex MCI(2)III(2)IV(2)). Interacts with PHB2; the interaction decreases in absence of SPHK2. Interacts with AFG1L. Interacts with ABCB7; this interaction allows the regulation of cellular iron homeostasis and cellular reactive oxygen species (ROS) levels in cardiomyocytes. Interacts with FLVCR2; this interaction occurs in the absence of heme and is disrupted upon heme binding. Interacts with IRGC.

It localises to the mitochondrion inner membrane. It participates in energy metabolism; oxidative phosphorylation. In terms of biological role, component of the cytochrome c oxidase, the last enzyme in the mitochondrial electron transport chain which drives oxidative phosphorylation. The respiratory chain contains 3 multisubunit complexes succinate dehydrogenase (complex II, CII), ubiquinol-cytochrome c oxidoreductase (cytochrome b-c1 complex, complex III, CIII) and cytochrome c oxidase (complex IV, CIV), that cooperate to transfer electrons derived from NADH and succinate to molecular oxygen, creating an electrochemical gradient over the inner membrane that drives transmembrane transport and the ATP synthase. Cytochrome c oxidase is the component of the respiratory chain that catalyzes the reduction of oxygen to water. Electrons originating from reduced cytochrome c in the intermembrane space (IMS) are transferred via the dinuclear copper A center (CU(A)) of subunit 2 and heme A of subunit 1 to the active site in subunit 1, a binuclear center (BNC) formed by heme A3 and copper B (CU(B)). The BNC reduces molecular oxygen to 2 water molecules using 4 electrons from cytochrome c in the IMS and 4 protons from the mitochondrial matrix. This Gorilla gorilla gorilla (Western lowland gorilla) protein is Cytochrome c oxidase subunit 4 isoform 1, mitochondrial (COX4I1).